A 127-amino-acid polypeptide reads, in one-letter code: Large ribosomal subunit protein eL32B (127 aa).

It belongs to the eukaryotic ribosomal protein eL32 family. Component of the large ribosomal subunit (LSU). Mature yeast ribosomes consist of a small (40S) and a large (60S) subunit. The 40S small subunit contains 1 molecule of ribosomal RNA (18S rRNA) and at least 33 different proteins. The large 60S subunit contains 3 rRNA molecules (25S, 5.8S and 5S rRNA) and at least 46 different proteins.

Its subcellular location is the cytoplasm. It is found in the nucleus. The protein localises to the nucleolus. Its function is as follows. Component of the ribosome, a large ribonucleoprotein complex responsible for the synthesis of proteins in the cell. The small ribosomal subunit (SSU) binds messenger RNAs (mRNAs) and translates the encoded message by selecting cognate aminoacyl-transfer RNA (tRNA) molecules. The large subunit (LSU) contains the ribosomal catalytic site termed the peptidyl transferase center (PTC), which catalyzes the formation of peptide bonds, thereby polymerizing the amino acids delivered by tRNAs into a polypeptide chain. The nascent polypeptides leave the ribosome through a tunnel in the LSU and interact with protein factors that function in enzymatic processing, targeting, and the membrane insertion of nascent chains at the exit of the ribosomal tunnel. In Schizosaccharomyces pombe (strain 972 / ATCC 24843) (Fission yeast), this protein is Large ribosomal subunit protein eL32B (rpl3201).